A 238-amino-acid chain; its full sequence is MLELITLKNIHVSFSGRSILSNISFSLLSNRIITLIGPNGAGKSTLIRVILGLIQPNLGNIIRSPKISVGYVPQKLYFNNLLPITVEKFMKLSKRKKNINILKILKRVKAQSLQYSRLQNLSGGEMQRILLARALLNNPNLLVLDEPTQGVDVMGQLDLYELINQIRSEMQCSILIVSHDLNFVMAKTNYVICLNKHICCSGTPQTVFKNLEFISIFGLKHIRELAIYQHNHDHVHQY.

Positions 5 to 220 constitute an ABC transporter domain; that stretch reads ITLKNIHVSF…LEFISIFGLK (216 aa). 37–44 lines the ATP pocket; that stretch reads GPNGAGKS.

This sequence belongs to the ABC transporter superfamily. Zinc importer (TC 3.A.1.15.5) family. The complex is composed of two ATP-binding proteins (ZnuC), two transmembrane proteins (ZnuB) and a solute-binding protein (ZnuA).

The protein resides in the cell inner membrane. The enzyme catalyses Zn(2+)(out) + ATP(in) + H2O(in) = Zn(2+)(in) + ADP(in) + phosphate(in) + H(+)(in). Part of the ABC transporter complex ZnuABC involved in zinc import. Responsible for energy coupling to the transport system. In Buchnera aphidicola subsp. Schizaphis graminum (strain Sg), this protein is Zinc import ATP-binding protein ZnuC.